We begin with the raw amino-acid sequence, 84 residues long: RNA-binding protein Hfq (84 aa).

The region spanning 9–69 (DRFLNILRTN…VSTIMPESFV (61 aa)) is the Sm domain.

This sequence belongs to the Hfq family. As to quaternary structure, homohexamer.

In terms of biological role, RNA chaperone that binds small regulatory RNA (sRNAs) and mRNAs to facilitate mRNA translational regulation in response to envelope stress, environmental stress and changes in metabolite concentrations. Also binds with high specificity to tRNAs. The chain is RNA-binding protein Hfq from Thermosipho africanus (strain TCF52B).